We begin with the raw amino-acid sequence, 266 residues long: HTH-type transcriptional regulator MurR (266 aa).

In terms of domain architecture, HTH rpiR-type spans 1 to 77; sequence MLYLTKIRNA…MALIGEYSAS (77 aa). Positions 37–56 form a DNA-binding region, H-T-H motif; that stretch reads SRQMAKQLGISQSSIVKFAQ. Residues 128–266 enclose the SIS domain; sequence IIEVISKAPF…LLFVGLVQHQ (139 aa).

As to quaternary structure, homotetramer.

The protein operates within amino-sugar metabolism; N-acetylmuramate degradation [regulation]. Represses the expression of the murPQ operon involved in the uptake and degradation of N-acetylmuramic acid (MurNAc). Binds to two adjacent inverted repeats within the operator region. MurNAc 6-phosphate, the substrate of MurQ, is the specific inducer that weakens binding of MurR to the operator. The sequence is that of HTH-type transcriptional regulator MurR from Shigella flexneri serotype 5b (strain 8401).